The sequence spans 158 residues: NKG2-F type II integral membrane protein (158 aa).

The span at 1–12 (MNKQRGTYSEVS) shows a compositional bias: polar residues. Residues 1–25 (MNKQRGTYSEVSLAQDPKRQQRKLK) are disordered. Over 1 to 74 (MNKQRGTYSE…LPPPEKLTAE (74 aa)) the chain is Cytoplasmic. A helical; Signal-anchor for type II membrane protein membrane pass occupies residues 75-95 (VLGIICIVLMATVLKTIVLIP). Residues 96–158 (CIGVLEQNNF…VLRRTLICFL (63 aa)) lie on the Extracellular side of the membrane.

In terms of assembly, can form disulfide-bonded heterodimer with CD94. In terms of tissue distribution, natural killer cells.

The protein localises to the membrane. May play a role as a receptor for the recognition of MHC class I HLA-E molecules by NK cells. This Homo sapiens (Human) protein is NKG2-F type II integral membrane protein (KLRC4).